Here is a 168-residue protein sequence, read N- to C-terminus: ATP synthase subunit b (168 aa).

Residues 9–29 traverse the membrane as a helical segment; the sequence is AIPFGTIAYTLFIFLILLVML.

The protein belongs to the ATPase B chain family. In terms of assembly, F-type ATPases have 2 components, F(1) - the catalytic core - and F(0) - the membrane proton channel. F(1) has five subunits: alpha(3), beta(3), gamma(1), delta(1), epsilon(1). F(0) has three main subunits: a(1), b(2) and c(10-14). The alpha and beta chains form an alternating ring which encloses part of the gamma chain. F(1) is attached to F(0) by a central stalk formed by the gamma and epsilon chains, while a peripheral stalk is formed by the delta and b chains.

It is found in the cell membrane. Functionally, f(1)F(0) ATP synthase produces ATP from ADP in the presence of a proton or sodium gradient. F-type ATPases consist of two structural domains, F(1) containing the extramembraneous catalytic core and F(0) containing the membrane proton channel, linked together by a central stalk and a peripheral stalk. During catalysis, ATP synthesis in the catalytic domain of F(1) is coupled via a rotary mechanism of the central stalk subunits to proton translocation. Component of the F(0) channel, it forms part of the peripheral stalk, linking F(1) to F(0). In Bacillus cereus (strain G9842), this protein is ATP synthase subunit b.